The primary structure comprises 919 residues: uncharacterized protein (919 aa).

The segment covering Met1–Ile15 has biased composition (low complexity). Disordered regions lie at residues Met1 to Asn167, Arg179 to Ser312, His415 to Leu491, Gln553 to Pro739, Thr751 to Ile863, and Leu883 to Asn906. Residues Lys16–Ile25 are compositionally biased toward polar residues. 3 stretches are compositionally biased toward low complexity: residues Ile34 to Ser75, Ser96 to Thr107, and Thr141 to Lys153. Residues Pro154–Asn167 show a composition bias toward basic and acidic residues. Positions Asn186–Thr292 are enriched in low complexity. Residues Pro420 to Asn433 show a composition bias toward polar residues. Composition is skewed to low complexity over residues Gly450–Pro471, Gln553–Ser564, Ser573–Gln589, and His618–Ser635. Polar residues predominate over residues Tyr678 to Gln695. The segment covering Ser712 to Thr723 has biased composition (low complexity). Residues Glu754–Asn768 show a composition bias toward polar residues. Residues Pro785 to Glu797 are compositionally biased toward basic and acidic residues. Residues Tyr798–Ile863 are compositionally biased toward low complexity. Positions Leu883–Arg899 are enriched in polar residues.

This is an uncharacterized protein from Dictyostelium discoideum (Social amoeba).